Reading from the N-terminus, the 879-residue chain is Alanine--tRNA ligase (879 aa).

Zn(2+)-binding residues include histidine 566, histidine 570, cysteine 668, and histidine 672.

Belongs to the class-II aminoacyl-tRNA synthetase family. The cofactor is Zn(2+).

It localises to the cytoplasm. It catalyses the reaction tRNA(Ala) + L-alanine + ATP = L-alanyl-tRNA(Ala) + AMP + diphosphate. Functionally, catalyzes the attachment of alanine to tRNA(Ala) in a two-step reaction: alanine is first activated by ATP to form Ala-AMP and then transferred to the acceptor end of tRNA(Ala). Also edits incorrectly charged Ser-tRNA(Ala) and Gly-tRNA(Ala) via its editing domain. This chain is Alanine--tRNA ligase, found in Clostridium perfringens (strain ATCC 13124 / DSM 756 / JCM 1290 / NCIMB 6125 / NCTC 8237 / Type A).